A 245-amino-acid polypeptide reads, in one-letter code: Eukaryotic translation initiation factor 3 subunit K (245 aa).

The PCI domain maps to 46–227 (YDCYANLALL…EAKGTVVREN (182 aa)).

It belongs to the eIF-3 subunit K family. As to quaternary structure, component of the eukaryotic translation initiation factor 3 (eIF-3) complex.

It localises to the cytoplasm. Its function is as follows. Component of the eukaryotic translation initiation factor 3 (eIF-3) complex, which is involved in protein synthesis of a specialized repertoire of mRNAs and, together with other initiation factors, stimulates binding of mRNA and methionyl-tRNAi to the 40S ribosome. The eIF-3 complex specifically targets and initiates translation of a subset of mRNAs involved in cell proliferation. The chain is Eukaryotic translation initiation factor 3 subunit K from Botryotinia fuckeliana (strain B05.10) (Noble rot fungus).